The following is a 420-amino-acid chain: F-box/LRR-repeat protein At2g43260 (420 aa).

Positions 7 to 53 (NPNSIDILPELLEEVLLRLPTKSILKCRIVSKQWRSLLESSRFAERH) constitute an F-box domain. LRR repeat units lie at residues 112–135 (QDWI…LNHN) and 226–251 (VYRI…QITV).

The chain is F-box/LRR-repeat protein At2g43260 from Arabidopsis thaliana (Mouse-ear cress).